Consider the following 360-residue polypeptide: GTPase Obg (360 aa).

Positions 1–156 constitute an Obg domain; sequence MFVDSVEIII…KCVRLELKLI (156 aa). The region spanning 157–360 is the OBG-type G domain; the sequence is ADIGLVGFPN…LKFVLLEALP (204 aa). GTP-binding positions include 163–170, 188–192, 210–213, 279–282, and 341–343; these read GFPNAGKS, FTTLV, DIPG, NKCD, and SAV. 2 residues coordinate Mg(2+): Ser-170 and Thr-190.

The protein belongs to the TRAFAC class OBG-HflX-like GTPase superfamily. OBG GTPase family. Monomer. Mg(2+) is required as a cofactor.

It localises to the cytoplasm. An essential GTPase which binds GTP, GDP and possibly (p)ppGpp with moderate affinity, with high nucleotide exchange rates and a fairly low GTP hydrolysis rate. Plays a role in control of the cell cycle, stress response, ribosome biogenesis and in those bacteria that undergo differentiation, in morphogenesis control. This is GTPase Obg from Helicobacter pylori (strain HPAG1).